A 451-amino-acid polypeptide reads, in one-letter code: Hexokinase (451 aa).

The Hexokinase domain maps to 6–445; it reads QQLFEKVVEI…SGKGAAAIAA (440 aa). The hexokinase small subdomain stretch occupies residues 63–195; it reads NGTETGNFLA…ELNVKCVAVV (133 aa). 74–79 contributes to the ATP binding site; sequence DLGGTN. Residues Ser144, 161–162, 196–197, 222–223, Glu249, and Glu283 each bind substrate; these read TK, ND, and TN. Residues 196-434 are hexokinase large subdomain; that stretch reads NDTVGTLASC…TRFCLRLSED (239 aa). Residues 288–289, 325–329, and 401–405 contribute to the ATP site; these read GM, TRYLT, and SLYKF.

It belongs to the hexokinase family. As to quaternary structure, monomer.

The enzyme catalyses a D-hexose + ATP = a D-hexose 6-phosphate + ADP + H(+). It carries out the reaction D-mannose + ATP = D-mannose 6-phosphate + ADP + H(+). The catalysed reaction is D-fructose + ATP = D-fructose 6-phosphate + ADP + H(+). It catalyses the reaction D-glucose + ATP = D-glucose 6-phosphate + ADP + H(+). Its pathway is carbohydrate metabolism; hexose metabolism. It functions in the pathway carbohydrate degradation; glycolysis; D-glyceraldehyde 3-phosphate and glycerone phosphate from D-glucose: step 1/4. Functionally, catalyzes the phosphorylation of various hexoses to hexose 6-phosphate. This chain is Hexokinase, found in Schistosoma mansoni (Blood fluke).